The sequence spans 272 residues: HTH-type transcriptional repressor AllR (272 aa).

The interval 1–20 (MTEVRRRGRPGQQEPSAQKG) is disordered. Residues 21–83 (AQALERGIAI…SQLGWWHIGL (63 aa)) form the HTH iclR-type domain. The H-T-H motif DNA-binding region spans 43–62 (VSDISLNLDLPLSTTFRLLK). An IclR-ED domain is found at 98–267 (VLSVGGPFMR…ARNISTALGL (170 aa)). Glyoxylate contacts are provided by residues 154 to 156 (SGA), D207, C217, and 234 to 236 (SIS).

Its function is as follows. Negative regulator of allantoin and glyoxylate utilization operons. Binds to the gcl promoter and to the allS-allA intergenic region. The sequence is that of HTH-type transcriptional repressor AllR (allR) from Klebsiella pneumoniae.